A 143-amino-acid polypeptide reads, in one-letter code: Transcriptional regulator MraZ (143 aa).

SpoVT-AbrB domains are found at residues 5–47 (EYLH…PLDE) and 76–119 (ATEC…SQAL).

It belongs to the MraZ family. In terms of assembly, forms oligomers.

The protein resides in the cytoplasm. It localises to the nucleoid. This Desulfitobacterium hafniense (strain Y51) protein is Transcriptional regulator MraZ.